Reading from the N-terminus, the 317-residue chain is uncharacterized protein (317 aa).

The helical transmembrane segment at 11–31 (ALLLVIFGSLIVSFAIFFMVL) threads the bilayer. PASTA domains follow at residues 33 to 100 (NNEI…FISK), 101 to 174 (GAII…LISK), and 180 to 241 (DKHV…TIAK).

It localises to the membrane. This is an uncharacterized protein from Borreliella burgdorferi (strain ATCC 35210 / DSM 4680 / CIP 102532 / B31) (Borrelia burgdorferi).